The following is a 532-amino-acid chain: E3 ubiquitin-protein ligase ICP0 (532 aa).

Residues cysteine 8, cysteine 11, cysteine 24, histidine 26, cysteine 29, cysteine 32, cysteine 43, and cysteine 46 each coordinate Zn(2+). The RING-type zinc-finger motif lies at cysteine 8 to lysine 47. 4 disordered regions span residues glutamate 206 to proline 391, alanine 406 to arginine 426, glutamate 461 to glycine 498, and glutamine 510 to glutamine 532. Composition is skewed to acidic residues over residues serine 217–valine 227 and aspartate 234–serine 243. The segment covering arginine 286–proline 295 has biased composition (basic residues).

Auto-ubiquitinated.

The catalysed reaction is S-ubiquitinyl-[E2 ubiquitin-conjugating enzyme]-L-cysteine + [acceptor protein]-L-lysine = [E2 ubiquitin-conjugating enzyme]-L-cysteine + N(6)-ubiquitinyl-[acceptor protein]-L-lysine.. In terms of biological role, evades nuclear antiviral defenses triggered by dsDNA viruses. Acts during the initial stages of lytic infection and the reactivation of latent viral genome. Prevents the antiviral effect of nuclear bodies by degrading host PML and SP100. This chain is E3 ubiquitin-protein ligase ICP0 (63), found in Equus caballus (Horse).